A 491-amino-acid chain; its full sequence is Ketol-acid reductoisomerase (NADP(+)) (491 aa).

The KARI N-terminal Rossmann domain maps to 15 to 208; the sequence is AQLGKCRFMA…GGHRAGVLES (194 aa). Residues 45 to 48, Arg68, Arg76, Ser78, and 108 to 110 contribute to the NADP(+) site; these read CGAQ and DKQ. The active site involves His132. Residue Gly158 participates in NADP(+) binding. KARI C-terminal knotted domains lie at 209-344 and 345-484; these read SFVA…NAPQ and FEGK…MTDM. Mg(2+) is bound by residues Asp217, Glu221, Glu389, and Glu393. Ser414 contributes to the substrate binding site.

The protein belongs to the ketol-acid reductoisomerase family. Mg(2+) serves as cofactor.

The catalysed reaction is (2R)-2,3-dihydroxy-3-methylbutanoate + NADP(+) = (2S)-2-acetolactate + NADPH + H(+). It carries out the reaction (2R,3R)-2,3-dihydroxy-3-methylpentanoate + NADP(+) = (S)-2-ethyl-2-hydroxy-3-oxobutanoate + NADPH + H(+). Its pathway is amino-acid biosynthesis; L-isoleucine biosynthesis; L-isoleucine from 2-oxobutanoate: step 2/4. It participates in amino-acid biosynthesis; L-valine biosynthesis; L-valine from pyruvate: step 2/4. In terms of biological role, involved in the biosynthesis of branched-chain amino acids (BCAA). Catalyzes an alkyl-migration followed by a ketol-acid reduction of (S)-2-acetolactate (S2AL) to yield (R)-2,3-dihydroxy-isovalerate. In the isomerase reaction, S2AL is rearranged via a Mg-dependent methyl migration to produce 3-hydroxy-3-methyl-2-ketobutyrate (HMKB). In the reductase reaction, this 2-ketoacid undergoes a metal-dependent reduction by NADPH to yield (R)-2,3-dihydroxy-isovalerate. This chain is Ketol-acid reductoisomerase (NADP(+)), found in Serratia proteamaculans (strain 568).